The chain runs to 281 residues: MTENTAETADESSDGGVTATTGAATTTPTTPPEPVIRARDLDVFYGSERALESVDIDIPEQQVTAIIGPSGCGKSTFLRCINRMNDRIDAARIDGDLTLRGTNVYDAAVDPVALRRRVGMVFQEPNPFPKSIYDNVAYGLEIQDVEGDHDEIVEQSLRRAALWDEVSHQLDSSGVALSGGQQQRLCIARAIAPDPEVLLMDEPASALDPVATSQVEDLIEELAEEYTVVIVTHNMQQAARISDKTAVFLTGGKLVEFGDTDQIFENPEHQRVEEYITGKFG.

The tract at residues 1–34 is disordered; that stretch reads MTENTAETADESSDGGVTATTGAATTTPTTPPEP. Residues 15–28 are compositionally biased toward low complexity; sequence GGVTATTGAATTTP. The ABC transporter domain occupies 36-276; the sequence is IRARDLDVFY…PEHQRVEEYI (241 aa). 68-75 is an ATP binding site; that stretch reads GPSGCGKS.

This sequence belongs to the ABC transporter superfamily. Phosphate importer (TC 3.A.1.7) family. As to quaternary structure, the complex is composed of two ATP-binding proteins (PstB), two transmembrane proteins (PstC and PstA) and a solute-binding protein (PstS).

The protein localises to the cell membrane. It catalyses the reaction phosphate(out) + ATP + H2O = ADP + 2 phosphate(in) + H(+). Part of the ABC transporter complex PstSACB involved in phosphate import. Responsible for energy coupling to the transport system. The sequence is that of Phosphate import ATP-binding protein PstB 1 from Halobacterium salinarum (strain ATCC 700922 / JCM 11081 / NRC-1) (Halobacterium halobium).